An 861-amino-acid polypeptide reads, in one-letter code: ATP-dependent helicase rhp16 (861 aa).

Polar residues predominate over residues 1 to 13 (MGTSCNKINSNSN). The disordered stretch occupies residues 1–217 (MGTSCNKINS…KSIPSHERTH (217 aa)). 2 stretches are compositionally biased toward basic and acidic residues: residues 14–23 (KGKENMHFVL) and 38–57 (VERD…KEFE). Over residues 60-82 (LSTNKKLIIQSNNTSSQHSTPPL) the composition is skewed to polar residues. Residues 83-95 (SISDTSTHTGSST) show a composition bias toward low complexity. Positions 96-106 (DNVEANPNTGF) are enriched in polar residues. Residues 109–123 (ARKRSLRSSNLKKKF) are compositionally biased toward basic residues. Residues 131-145 (ESNESEFIDDDESDE) show a composition bias toward acidic residues. Low complexity predominate over residues 193 to 204 (ARASSSASSSSR). The Helicase ATP-binding domain occupies 268 to 442 (RQEDSSFGGG…FSLLRFLRAD (175 aa)). Residue 281–288 (DEMGMGKT) coordinates ATP. The DEAH box motif lies at 393-396 (DEAH). Residues 609-652 (CKICDEVAQDAIESRCHHTFCRLCVTEYINAAGDGENVNCPSCF) form an RING-type zinc finger. The Helicase C-terminal domain occupies 695–848 (LVEELYLLRK…TIDQDEKALN (154 aa)).

Belongs to the SNF2/RAD54 helicase family.

The protein localises to the nucleus. Involved in global genome repair (GGR) via nucleotide excision repair (NER), in conjunction with rhp7, after UV irradiation. The sequence is that of ATP-dependent helicase rhp16 (rhp16) from Schizosaccharomyces pombe (strain 972 / ATCC 24843) (Fission yeast).